Consider the following 254-residue polypeptide: 4-hydroxy-tetrahydrodipicolinate reductase (254 aa).

Residues 8–13, 87–89, and 111–114 contribute to the NAD(+) site; these read GGSGRV, GTT, and ATNM. His-143 (proton donor/acceptor) is an active-site residue. His-144 contacts (S)-2,3,4,5-tetrahydrodipicolinate. Residue Lys-147 is the Proton donor of the active site. (S)-2,3,4,5-tetrahydrodipicolinate is bound at residue 153-154; that stretch reads GT.

Belongs to the DapB family.

It localises to the cytoplasm. It carries out the reaction (S)-2,3,4,5-tetrahydrodipicolinate + NAD(+) + H2O = (2S,4S)-4-hydroxy-2,3,4,5-tetrahydrodipicolinate + NADH + H(+). It catalyses the reaction (S)-2,3,4,5-tetrahydrodipicolinate + NADP(+) + H2O = (2S,4S)-4-hydroxy-2,3,4,5-tetrahydrodipicolinate + NADPH + H(+). It functions in the pathway amino-acid biosynthesis; L-lysine biosynthesis via DAP pathway; (S)-tetrahydrodipicolinate from L-aspartate: step 4/4. Its function is as follows. Catalyzes the conversion of 4-hydroxy-tetrahydrodipicolinate (HTPA) to tetrahydrodipicolinate. This chain is 4-hydroxy-tetrahydrodipicolinate reductase, found in Nitratiruptor sp. (strain SB155-2).